Reading from the N-terminus, the 184-residue chain is MKNVTDSFVSLGHWPSAGSFGFNTDIFATNPINLSVVLGVLIFFGKGVLSDLLDNRKQRILSTIRNSEELRGGAIEQLEKARARLRKVEIEADEFRVNGYSEIEREKSNLINAAYENLERLENYKNESIHFEQQRAMNQVRQRVFQQALQGALETLNSYLNSELHLRTISANIGMLGTMKNITD.

A helical membrane pass occupies residues 27-49; the sequence is FATNPINLSVVLGVLIFFGKGVL.

It belongs to the ATPase B chain family. In terms of assembly, F-type ATPases have 2 components, F(1) - the catalytic core - and F(0) - the membrane proton channel. F(1) has five subunits: alpha(3), beta(3), gamma(1), delta(1), epsilon(1). F(0) has four main subunits: a(1), b(1), b'(1) and c(10-14). The alpha and beta chains form an alternating ring which encloses part of the gamma chain. F(1) is attached to F(0) by a central stalk formed by the gamma and epsilon chains, while a peripheral stalk is formed by the delta, b and b' chains.

It localises to the plastid. It is found in the chloroplast thylakoid membrane. Functionally, f(1)F(0) ATP synthase produces ATP from ADP in the presence of a proton or sodium gradient. F-type ATPases consist of two structural domains, F(1) containing the extramembraneous catalytic core and F(0) containing the membrane proton channel, linked together by a central stalk and a peripheral stalk. During catalysis, ATP synthesis in the catalytic domain of F(1) is coupled via a rotary mechanism of the central stalk subunits to proton translocation. Component of the F(0) channel, it forms part of the peripheral stalk, linking F(1) to F(0). The polypeptide is ATP synthase subunit b, chloroplastic (Amborella trichopoda).